We begin with the raw amino-acid sequence, 348 residues long: Dihydroorotase (348 aa).

The Zn(2+) site is built by His14 and His16. Residues 16–18 and Asn42 contribute to the substrate site; that span reads HLR. The Zn(2+) site is built by Lys100, His137, and His175. Residue Lys100 is modified to N6-carboxylysine. A substrate-binding site is contributed by His137. Leu220 contacts substrate. Asp248 is a Zn(2+) binding site. Residue Asp248 is part of the active site. His252 and Ala264 together coordinate substrate.

The protein belongs to the metallo-dependent hydrolases superfamily. DHOase family. Class II DHOase subfamily. Homodimer. Zn(2+) serves as cofactor.

It carries out the reaction (S)-dihydroorotate + H2O = N-carbamoyl-L-aspartate + H(+). Its pathway is pyrimidine metabolism; UMP biosynthesis via de novo pathway; (S)-dihydroorotate from bicarbonate: step 3/3. Catalyzes the reversible cyclization of carbamoyl aspartate to dihydroorotate. This Pseudomonas putida (strain GB-1) protein is Dihydroorotase.